Here is a 567-residue protein sequence, read N- to C-terminus: Thiol:disulfide interchange protein DsbD (567 aa).

The signal sequence occupies residues 1-19 (MAQRIFTLILLLCSTSAFA). 2 cysteine pairs are disulfide-bonded: C122-C128 and C185-C307. Transmembrane regions (helical) follow at residues 166-186 (LPFS…TPCV), 211-231 (LLAF…GLVV), 246-266 (YVLI…FGLF), 299-319 (IAGL…LLYI), 326-346 (WLGG…LMLV), 360-380 (WMAH…VFLL), 387-407 (AWGL…AFIT), and 418-438 (IVQI…QDWA). The region spanning 435 to 567 (QDWAFGSPSA…FSAHLHDRQP (133 aa)) is the Thioredoxin domain. Cysteines 482 and 485 form a disulfide.

Belongs to the thioredoxin family. DsbD subfamily.

It localises to the cell inner membrane. It carries out the reaction [protein]-dithiol + NAD(+) = [protein]-disulfide + NADH + H(+). It catalyses the reaction [protein]-dithiol + NADP(+) = [protein]-disulfide + NADPH + H(+). In terms of biological role, required to facilitate the formation of correct disulfide bonds in some periplasmic proteins and for the assembly of the periplasmic c-type cytochromes. Acts by transferring electrons from cytoplasmic thioredoxin to the periplasm. This transfer involves a cascade of disulfide bond formation and reduction steps. This chain is Thiol:disulfide interchange protein DsbD, found in Salmonella paratyphi A (strain ATCC 9150 / SARB42).